A 353-amino-acid polypeptide reads, in one-letter code: UDP-N-acetylglucosamine--N-acetylmuramyl-(pentapeptide) pyrophosphoryl-undecaprenol N-acetylglucosamine transferase (353 aa).

UDP-N-acetyl-alpha-D-glucosamine contacts are provided by residues 10–12, N124, S183, and Q283; that span reads TGG.

The protein belongs to the glycosyltransferase 28 family. MurG subfamily.

The protein localises to the cell inner membrane. It carries out the reaction di-trans,octa-cis-undecaprenyl diphospho-N-acetyl-alpha-D-muramoyl-L-alanyl-D-glutamyl-meso-2,6-diaminopimeloyl-D-alanyl-D-alanine + UDP-N-acetyl-alpha-D-glucosamine = di-trans,octa-cis-undecaprenyl diphospho-[N-acetyl-alpha-D-glucosaminyl-(1-&gt;4)]-N-acetyl-alpha-D-muramoyl-L-alanyl-D-glutamyl-meso-2,6-diaminopimeloyl-D-alanyl-D-alanine + UDP + H(+). It functions in the pathway cell wall biogenesis; peptidoglycan biosynthesis. Cell wall formation. Catalyzes the transfer of a GlcNAc subunit on undecaprenyl-pyrophosphoryl-MurNAc-pentapeptide (lipid intermediate I) to form undecaprenyl-pyrophosphoryl-MurNAc-(pentapeptide)GlcNAc (lipid intermediate II). The polypeptide is UDP-N-acetylglucosamine--N-acetylmuramyl-(pentapeptide) pyrophosphoryl-undecaprenol N-acetylglucosamine transferase (Helicobacter pylori (strain ATCC 700392 / 26695) (Campylobacter pylori)).